A 107-amino-acid polypeptide reads, in one-letter code: U20-lycotoxin-Ls1b (107 aa).

An N-terminal signal peptide occupies residues 1 to 30 (MFSTSDQVSKMNSRILSALLILGIATCVIA). In terms of domain architecture, WAP spans 31–76 (GGFCPKSRHPQCNLSYKINDCCAQSDCRVGSVCCVEGCGNVCRAES). Intrachain disulfides connect C34–C64, C42–C68, C51–C63, C52–C90, and C57–C72.

It belongs to the venom protein 11 family. 02 (wap-2) subfamily. In terms of processing, contains 5 disulfide bonds. In terms of tissue distribution, expressed by the venom gland.

It localises to the secreted. Has antibacterial activity. The chain is U20-lycotoxin-Ls1b from Lycosa singoriensis (Wolf spider).